The sequence spans 415 residues: Histidine--tRNA ligase (415 aa).

It belongs to the class-II aminoacyl-tRNA synthetase family. Homodimer.

The protein resides in the cytoplasm. It catalyses the reaction tRNA(His) + L-histidine + ATP = L-histidyl-tRNA(His) + AMP + diphosphate + H(+). The sequence is that of Histidine--tRNA ligase from Idiomarina loihiensis (strain ATCC BAA-735 / DSM 15497 / L2-TR).